We begin with the raw amino-acid sequence, 325 residues long: Tetraacyldisaccharide 4'-kinase (325 aa).

ATP is bound at residue 55–62 (TAGGNGKT).

The protein belongs to the LpxK family.

The enzyme catalyses a lipid A disaccharide + ATP = a lipid IVA + ADP + H(+). It participates in glycolipid biosynthesis; lipid IV(A) biosynthesis; lipid IV(A) from (3R)-3-hydroxytetradecanoyl-[acyl-carrier-protein] and UDP-N-acetyl-alpha-D-glucosamine: step 6/6. Transfers the gamma-phosphate of ATP to the 4'-position of a tetraacyldisaccharide 1-phosphate intermediate (termed DS-1-P) to form tetraacyldisaccharide 1,4'-bis-phosphate (lipid IVA). This Citrobacter koseri (strain ATCC BAA-895 / CDC 4225-83 / SGSC4696) protein is Tetraacyldisaccharide 4'-kinase.